The primary structure comprises 508 residues: Photosystem II CP47 reaction center protein (508 aa).

6 consecutive transmembrane segments (helical) span residues 21-36 (AVHI…WAGS), 101-115 (IVFS…IWHW), 140-156 (GIHL…FGAF), 203-218 (IAAG…FHLS), 237-252 (VLSS…AFVV), and 457-472 (SFAL…HGAR).

It belongs to the PsbB/PsbC family. PsbB subfamily. In terms of assembly, PSII is composed of 1 copy each of membrane proteins PsbA, PsbB, PsbC, PsbD, PsbE, PsbF, PsbH, PsbI, PsbJ, PsbK, PsbL, PsbM, PsbT, PsbX, PsbY, PsbZ, Psb30/Ycf12, at least 3 peripheral proteins of the oxygen-evolving complex and a large number of cofactors. It forms dimeric complexes. It depends on Binds multiple chlorophylls. PSII binds additional chlorophylls, carotenoids and specific lipids. as a cofactor.

It is found in the plastid. Its subcellular location is the chloroplast thylakoid membrane. In terms of biological role, one of the components of the core complex of photosystem II (PSII). It binds chlorophyll and helps catalyze the primary light-induced photochemical processes of PSII. PSII is a light-driven water:plastoquinone oxidoreductase, using light energy to abstract electrons from H(2)O, generating O(2) and a proton gradient subsequently used for ATP formation. The sequence is that of Photosystem II CP47 reaction center protein from Trachelium caeruleum (Blue throatwort).